The following is a 94-amino-acid chain: Aspartyl/glutamyl-tRNA(Asn/Gln) amidotransferase subunit C (94 aa).

Residues 72–94 are disordered; the sequence is PREKALQGAPEVSEGQFKVPRVV.

The protein belongs to the GatC family. Heterotrimer of A, B and C subunits.

The catalysed reaction is L-glutamyl-tRNA(Gln) + L-glutamine + ATP + H2O = L-glutaminyl-tRNA(Gln) + L-glutamate + ADP + phosphate + H(+). It carries out the reaction L-aspartyl-tRNA(Asn) + L-glutamine + ATP + H2O = L-asparaginyl-tRNA(Asn) + L-glutamate + ADP + phosphate + 2 H(+). Its function is as follows. Allows the formation of correctly charged Asn-tRNA(Asn) or Gln-tRNA(Gln) through the transamidation of misacylated Asp-tRNA(Asn) or Glu-tRNA(Gln) in organisms which lack either or both of asparaginyl-tRNA or glutaminyl-tRNA synthetases. The reaction takes place in the presence of glutamine and ATP through an activated phospho-Asp-tRNA(Asn) or phospho-Glu-tRNA(Gln). The sequence is that of Aspartyl/glutamyl-tRNA(Asn/Gln) amidotransferase subunit C from Moorella thermoacetica (strain ATCC 39073 / JCM 9320).